Reading from the N-terminus, the 597-residue chain is Elongation factor 4 (597 aa).

In terms of domain architecture, tr-type G spans 2–184 (DHIRNFSIIA…ALIAKVPPPK (183 aa)). GTP is bound by residues 14 to 19 (DHGKST) and 131 to 134 (NKID).

It belongs to the TRAFAC class translation factor GTPase superfamily. Classic translation factor GTPase family. LepA subfamily.

The protein localises to the cell inner membrane. It carries out the reaction GTP + H2O = GDP + phosphate + H(+). Its function is as follows. Required for accurate and efficient protein synthesis under certain stress conditions. May act as a fidelity factor of the translation reaction, by catalyzing a one-codon backward translocation of tRNAs on improperly translocated ribosomes. Back-translocation proceeds from a post-translocation (POST) complex to a pre-translocation (PRE) complex, thus giving elongation factor G a second chance to translocate the tRNAs correctly. Binds to ribosomes in a GTP-dependent manner. The chain is Elongation factor 4 from Paraburkholderia phymatum (strain DSM 17167 / CIP 108236 / LMG 21445 / STM815) (Burkholderia phymatum).